The chain runs to 70 residues: DNA gyrase inhibitor YacG (70 aa).

4 residues coordinate Zn(2+): Cys20, Cys23, Cys35, and Cys39.

This sequence belongs to the DNA gyrase inhibitor YacG family. As to quaternary structure, interacts with GyrB. Zn(2+) serves as cofactor.

Inhibits all the catalytic activities of DNA gyrase by preventing its interaction with DNA. Acts by binding directly to the C-terminal domain of GyrB, which probably disrupts DNA binding by the gyrase. The chain is DNA gyrase inhibitor YacG from Rhizobium etli (strain CIAT 652).